The chain runs to 329 residues: Ribosomal RNA small subunit methyltransferase H (329 aa).

S-adenosyl-L-methionine is bound by residues 47 to 49, Asp67, Phe93, Asp115, and Gln122; that span reads GGH.

The protein belongs to the methyltransferase superfamily. RsmH family.

Its subcellular location is the cytoplasm. The enzyme catalyses cytidine(1402) in 16S rRNA + S-adenosyl-L-methionine = N(4)-methylcytidine(1402) in 16S rRNA + S-adenosyl-L-homocysteine + H(+). In terms of biological role, specifically methylates the N4 position of cytidine in position 1402 (C1402) of 16S rRNA. The polypeptide is Ribosomal RNA small subunit methyltransferase H (Blochmanniella pennsylvanica (strain BPEN)).